Reading from the N-terminus, the 178-residue chain is Large ribosomal subunit protein uL6 (178 aa).

This sequence belongs to the universal ribosomal protein uL6 family. Part of the 50S ribosomal subunit.

This protein binds to the 23S rRNA, and is important in its secondary structure. It is located near the subunit interface in the base of the L7/L12 stalk, and near the tRNA binding site of the peptidyltransferase center. The polypeptide is Large ribosomal subunit protein uL6 (Gluconobacter oxydans (strain 621H) (Gluconobacter suboxydans)).